A 245-amino-acid polypeptide reads, in one-letter code: 1-(5-phosphoribosyl)-5-[(5-phosphoribosylamino)methylideneamino] imidazole-4-carboxamide isomerase (245 aa).

The Proton acceptor role is filled by aspartate 13. Aspartate 132 (proton donor) is an active-site residue.

This sequence belongs to the HisA/HisF family.

The protein resides in the cytoplasm. The enzyme catalyses 1-(5-phospho-beta-D-ribosyl)-5-[(5-phospho-beta-D-ribosylamino)methylideneamino]imidazole-4-carboxamide = 5-[(5-phospho-1-deoxy-D-ribulos-1-ylimino)methylamino]-1-(5-phospho-beta-D-ribosyl)imidazole-4-carboxamide. Its pathway is amino-acid biosynthesis; L-histidine biosynthesis; L-histidine from 5-phospho-alpha-D-ribose 1-diphosphate: step 4/9. This is 1-(5-phosphoribosyl)-5-[(5-phosphoribosylamino)methylideneamino] imidazole-4-carboxamide isomerase from Frankia alni (strain DSM 45986 / CECT 9034 / ACN14a).